The chain runs to 300 residues: 4-hydroxy-tetrahydrodipicolinate synthase (300 aa).

Thr-53 contributes to the pyruvate binding site. Catalysis depends on Tyr-141, which acts as the Proton donor/acceptor. Catalysis depends on Lys-169, which acts as the Schiff-base intermediate with substrate. Thr-211 provides a ligand contact to pyruvate.

It belongs to the DapA family. As to quaternary structure, homotetramer; dimer of dimers.

The protein localises to the cytoplasm. It carries out the reaction L-aspartate 4-semialdehyde + pyruvate = (2S,4S)-4-hydroxy-2,3,4,5-tetrahydrodipicolinate + H2O + H(+). Its pathway is amino-acid biosynthesis; L-lysine biosynthesis via DAP pathway; (S)-tetrahydrodipicolinate from L-aspartate: step 3/4. In terms of biological role, catalyzes the condensation of (S)-aspartate-beta-semialdehyde [(S)-ASA] and pyruvate to 4-hydroxy-tetrahydrodipicolinate (HTPA). This chain is 4-hydroxy-tetrahydrodipicolinate synthase, found in Rickettsia massiliae (strain Mtu5).